A 148-amino-acid chain; its full sequence is HTH-type transcriptional regulator SarZ (148 aa).

The region spanning 9-139 (SKQLCFLFYV…IINNLRNFVS (131 aa)) is the HTH marR-type domain. The segment at residues 55–78 (IKKLGERVFLDSGTLTPLLKKLEK) is a DNA-binding region (H-T-H motif).

The protein belongs to the SarZ family.

The protein resides in the cytoplasm. Activates transcription of virulence factors alpha- and beta hemolysin genes (hla and hlb). Also, activates RNAIII expression, a central regulator transcribed from the agr locus. The protein is HTH-type transcriptional regulator SarZ (sarZ) of Staphylococcus aureus (strain USA300).